The chain runs to 514 residues: Serine--tRNA ligase, cytoplasmic (514 aa).

At Met-1 the chain carries N-acetylmethionine. The tract at residues 9 to 61 is interaction with tRNA; the sequence is RVDKGGDPALIRETQEKRFKDPGLVDQLVKADSEWRRCRFRADNLNKLKNLCS. Position 241 is a phosphoserine (Ser-241). The L-serine site is built by Thr-271 and Arg-302. Residues 302–304 and 318–321 contribute to the ATP site; these read RQE and VHQF. Lys-323 carries the post-translational modification N6-acetyllysine. Glu-325 contacts L-serine. ATP is bound at residue 391-394; the sequence is ELVS. Asn-427 serves as a coordination point for L-serine. The interval 471 to 514 is disordered; it reads VKPAPIDQEPSKKQKKQHEGSKKKAAARDVALESRLQNMEVTDA. Basic and acidic residues predominate over residues 479–502; that stretch reads EPSKKQKKQHEGSKKKAAARDVAL. The Nuclear localization signal motif lies at 482-494; that stretch reads KKQKKQHEGSKKK. Over residues 505–514 the composition is skewed to polar residues; it reads RLQNMEVTDA.

Belongs to the class-II aminoacyl-tRNA synthetase family. Type-1 seryl-tRNA synthetase subfamily. In terms of assembly, homodimer. The tRNA molecule may bind across the dimer. Interacts with SIRT2. Interacts with METTL6; interaction is required for the tRNA N(3)-methylcytidine methyltransferase activity of METTL6.

The protein localises to the cytoplasm. Its subcellular location is the nucleus. It carries out the reaction tRNA(Ser) + L-serine + ATP = L-seryl-tRNA(Ser) + AMP + diphosphate + H(+). The catalysed reaction is tRNA(Sec) + L-serine + ATP = L-seryl-tRNA(Sec) + AMP + diphosphate + H(+). The protein operates within aminoacyl-tRNA biosynthesis; selenocysteinyl-tRNA(Sec) biosynthesis; L-seryl-tRNA(Sec) from L-serine and tRNA(Sec): step 1/1. Catalyzes the attachment of serine to tRNA(Ser) in a two-step reaction: serine is first activated by ATP to form Ser-AMP and then transferred to the acceptor end of tRNA(Ser). Is probably also able to aminoacylate tRNA(Sec) with serine, to form the misacylated tRNA L-seryl-tRNA(Sec), which will be further converted into selenocysteinyl-tRNA(Sec). In the nucleus, binds to the VEGFA core promoter and prevents MYC binding and transcriptional activation by MYC. Recruits SIRT2 to the VEGFA promoter, promoting deacetylation of histone H4 at 'Lys-16' (H4K16). Thereby, inhibits the production of VEGFA and sprouting angiogenesis mediated by VEGFA. This chain is Serine--tRNA ligase, cytoplasmic (SARS1), found in Macaca fascicularis (Crab-eating macaque).